The primary structure comprises 704 residues: Polyribonucleotide nucleotidyltransferase (704 aa).

Mg(2+) is bound by residues Asp488 and Asp494. Residues 555–614 (PRITTIKINPEKIRDVIGKGGATIRALTEETGTTIELDDDGTVKIASSNGEATKEAIRRI) form the KH domain. One can recognise an S1 motif domain in the interval 624–692 (GTVYNGKVVR…RQGRVRLSMK (69 aa)).

This sequence belongs to the polyribonucleotide nucleotidyltransferase family. Component of the RNA degradosome, which is a multiprotein complex involved in RNA processing and mRNA degradation. The cofactor is Mg(2+).

It is found in the cytoplasm. The enzyme catalyses RNA(n+1) + phosphate = RNA(n) + a ribonucleoside 5'-diphosphate. Its function is as follows. Involved in mRNA degradation. Catalyzes the phosphorolysis of single-stranded polyribonucleotides processively in the 3'- to 5'-direction. This chain is Polyribonucleotide nucleotidyltransferase, found in Shewanella halifaxensis (strain HAW-EB4).